The chain runs to 1470 residues: MAAAPSASGRRSMSWGSSISQSFRQAEADDPFGRAASQQGHDDDEENLRWAALEKLPTYDRMRRGVIRTALLHHDGGGDGGGAAAAAKDGRMELVDIQKLAAGNLGRALLDRVFQDDSERFLRRLRDRIDMVGIELPTIEVRYEQLSIQAEVFVGSRALPTLTNAATNVLQGLIGRFGSSNKRTINILQDVSGIIKPSRMTLLLGPPSSGKSTLMRALTGKLDKNLKVSGDITYCGHTFSEFYPERTSAYVSQYDLHNAEMTVRETLDFSGRCLGIGARYDMLAELARRERNAGIKPDPEIDAFMKATAVQGHKTNITTDVTLKALGLDICADIIIGDEMIRGISGGQKKRVTTGEMLTGPARALFMDEISTGLDSSSTFEIVKYIGHLVHVMNETVMISLLQPPPETYNLFDDIILLSEGYIVYHGPRENILEFFENAGFRCPERKGIADFLQEVTSKKDQQQYWYHDQERYRYVSVPEFAQRFKSFHVGQKMQKEMQIPYDKSSTHPAALTTTKYGLSSWESLRAVMSREWLLMKRNSFIYIFKVTQLIILAFMSMTVFLRTKMPSGTISDGTKFLGALTFSLITILFNGFAELQLTIKKLPVFYKHRDFLFFPAWTFGVANILLKVPVSLVEAAVWVVLTYYVMGFAPSAGRFFRQFIAFFVTHQMAMAMFRFLGAILKTMVVANTFGMFVLLIVFIFGGFLISRNDIKPWWIWGYWASPMMYSQQAISINEFLASRWAIPNTDATIDEPTVGKAILKSKGLITSDGGFWISIGALIGFLVVFNILYILALTYLSPGGSSNTIVSDEDSEDKTDMKTRNEQQMSQIVHNNGASNTSATSSIPMSGSRSTNQQSRSQIVLPFQPLSLCFNHVNYYVDMPTEMKEQGFTESRLQLLSDISGVFRPGVLTALVGVSGAGKTTLMDVLAGRKTSGVIEGDITLSGYPKKQETFARISGYCEQTDIHSPNVTVYESILYSAWLRLSSDVDTNTRKMFVDEVMSLVELDVLRNALVGLPGVSGLSTEQRKRLTIAVELVANPSVIFMDEPTSGLDARAAAIVMRTVRNTVNTGRTVVCTIHQPSIDIFESFDELLLLKRGGQVIYAGELGRHSHKLVEYFEAVPGVPKITEGYNPATWMLEVTSPIAEARLNVNFAEIYANSELYRKNQELIKELSTPPPGYQDLSFPTKYSQNFYSQCIANFWKQYRSYWKNPPYNAMRYLMTLLNGLVFGTVFWQKGTKISSQQDLFNLLGATYAATFFLGAANCITVQPVVSIERTVFYRERAAGMYSSLSYAFAQACVEVIYNILQGILYTIIIYAMIGYDWKADKFFYFMFFIVASFNYFTLFGMMLVACTPSAMLANILISFVLPLWNLFAGFLVVRPLIPIWWRWYYWANPVSWTIYGVVASQFGKNGDVLSVPGGSPTVVKQFLEDNLGMRHSFLGYVVLTHFGYIIVFFFIFGYAIKYFNFQKR.

Residues 1 to 47 (MAAAPSASGRRSMSWGSSISQSFRQAEADDPFGRAASQQGHDDDEEN) are disordered. Residues 9–24 (GRRSMSWGSSISQSFR) are compositionally biased toward polar residues. The ABC transporter 1 domain maps to 172–445 (GLIGRFGSSN…FENAGFRCPE (274 aa)). 205-212 (GPPSSGKS) contributes to the ATP binding site. One can recognise an ABC transmembrane type-2 1 domain in the interval 523-736 (ESLRAVMSRE…SQQAISINEF (214 aa)). 6 consecutive transmembrane segments (helical) span residues 541–561 (FIYI…MTVF), 577–597 (FLGA…AELQ), 629–649 (VPVS…VMGF), 660–680 (FIAF…LGAI), 686–706 (VANT…GFLI), and 772–792 (FWIS…LYIL). A disordered region spans residues 828–852 (QIVHNNGASNTSATSSIPMSGSRST). A compositionally biased stretch (low complexity) spans 832–843 (NNGASNTSATSS). The ABC transporter 2 domain maps to 869 to 1121 (LCFNHVNYYV…KLVEYFEAVP (253 aa)). Residue 914 to 921 (GVSGAGKT) coordinates ATP. Residues 1194-1408 (SQCIANFWKQ…TIYGVVASQF (215 aa)) enclose the ABC transmembrane type-2 2 domain. 7 consecutive transmembrane segments (helical) span residues 1215 to 1234 (AMRY…VFWQ), 1249 to 1271 (LGAT…QPVV), 1301 to 1321 (VIYN…MIGY), 1331 to 1351 (FMFF…MLVA), 1359 to 1379 (ANIL…FLVV), 1389 to 1409 (WYYW…SQFG), and 1439 to 1459 (FLGY…FIFG).

This sequence belongs to the ABC transporter superfamily. ABCG family. PDR (TC 3.A.1.205) subfamily.

Its subcellular location is the membrane. May be a general defense protein. This Oryza sativa subsp. japonica (Rice) protein is ABC transporter G family member 48.